A 124-amino-acid chain; its full sequence is Mediator of RNA polymerase II transcription subunit 31 (124 aa).

It belongs to the Mediator complex subunit 31 family. Component of the Mediator complex.

The protein localises to the nucleus. Component of the Mediator complex, a coactivator involved in the regulated transcription of nearly all RNA polymerase II-dependent genes. Mediator functions as a bridge to convey information from gene-specific regulatory proteins to the basal RNA polymerase II transcription machinery. Mediator is recruited to promoters by direct interactions with regulatory proteins and serves as a scaffold for the assembly of a functional preinitiation complex with RNA polymerase II and the general transcription factors. This chain is Mediator of RNA polymerase II transcription subunit 31 (SOH1), found in Kluyveromyces lactis (strain ATCC 8585 / CBS 2359 / DSM 70799 / NBRC 1267 / NRRL Y-1140 / WM37) (Yeast).